Reading from the N-terminus, the 196-residue chain is Alpha-crystallin A chain (196 aa).

Met1 carries the N-acetylmethionine modification. The required for complex formation with BFSP1 and BFSP2 stretch occupies residues 1–63 (MDVTIQHPWF…RTVLDSGISE (63 aa)). Deamidated glutamine; partial is present on Gln6. A Phosphoserine modification is found at Ser45. The residue at position 50 (Gln50) is a Deamidated glutamine; partial. Positions 76–185 (HAGNPKNNPI…GHSERAIPVS (110 aa)) constitute a sHSP domain. 2 positions are modified to N6-acetyllysine: Lys93 and Lys122. His123 contacts Zn(2+). The residue at position 124 (Asn124) is a Deamidated asparagine; partial. Zn(2+) contacts are provided by Glu125 and His130. Phosphoserine is present on Ser145. At Asn146 the chain carries Deamidated asparagine; partial. The segment at 168–196 (KVQSGLDAGHSERAIPVSREEKPSSAPSS) is disordered. Gln170 carries the deamidated glutamine; partial modification. Basic and acidic residues predominate over residues 176–190 (GHSERAIPVSREEKP). His177 serves as a coordination point for Zn(2+). A glycan (O-linked (GlcNAc) serine) is linked at Ser185.

This sequence belongs to the small heat shock protein (HSP20) family. As to quaternary structure, heteromer composed of three CRYAA and one CRYAB subunits. Inter-subunit bridging via zinc ions enhances stability, which is crucial as there is no protein turn over in the lens. Can also form homodimers and homotetramers (dimers of dimers) which serve as the building blocks of homooligomers. Within homooligomers, the zinc-binding motif is created from residues of 3 different molecules. His-123 and Glu-125 from one molecule are ligands of the zinc ion, and His-130 and His-177 residues from additional molecules complete the site with tetrahedral coordination geometry. Part of a complex required for lens intermediate filament formation composed of BFSP1, BFSP2 and CRYAA. In terms of processing, acetylation at Lys-93 may increase chaperone activity. Post-translationally, undergoes age-dependent proteolytical cleavage at the C-terminus.

It is found in the cytoplasm. The protein resides in the nucleus. In terms of biological role, contributes to the transparency and refractive index of the lens. Acts as a chaperone, preventing aggregation of various proteins under a wide range of stress conditions. Required for the correct formation of lens intermediate filaments as part of a complex composed of BFSP1, BFSP2 and CRYAA. The sequence is that of Alpha-crystallin A chain (CRYAA) from Mesocricetus auratus (Golden hamster).